Reading from the N-terminus, the 397-residue chain is Cytochrome b (397 aa).

The next 4 helical transmembrane spans lie at 38–58 (FGSLAGICLVIQIVTGVFLAM), 82–104 (WLLRYMHANGASMFFIVVYLHIF), 119–139 (VWCLGVVIFLLMIVTAFIGYV), and 185–205 (FFSLHYLLPFILVGASLLHLA). Heme b contacts are provided by H88 and H102. Residues H189 and H203 each coordinate heme b. H208 is an a ubiquinone binding site. 4 helical membrane passes run 231–251 (FYVKDLVGWVAFAIFFSIWIF), 295–315 (AGGVAAIALVFISLLALPFFK), 327–347 (IYQGIFWLLLADCLLLGWIGC), and 354–373 (FVTIGQISSFFFFLFFAITP).

The protein belongs to the cytochrome b family. The main subunits of complex b-c1 are: cytochrome b, cytochrome c1 and the Rieske protein. It depends on heme b as a cofactor.

It is found in the mitochondrion inner membrane. Component of the ubiquinol-cytochrome c reductase complex (complex III or cytochrome b-c1 complex) that is part of the mitochondrial respiratory chain. The b-c1 complex mediates electron transfer from ubiquinol to cytochrome c. Contributes to the generation of a proton gradient across the mitochondrial membrane that is then used for ATP synthesis. This is Cytochrome b (MT-CYB) from Oryza sativa subsp. indica (Rice).